Consider the following 611-residue polypeptide: Dehydrogenase pkfF (611 aa).

Positions 1–19 (MRHTALLPLVSSFIVPALA) are cleaved as a signal peptide. 2 N-linked (GlcNAc...) asparagine glycosylation sites follow: Asn28 and Asn38. FAD contacts are provided by residues 50–51 (TS), 71–72 (EA), and 137–140 (HYMV). Residues Asn180, Asn187, Asn240, Asn272, Asn409, and Asn471 are each glycosylated (N-linked (GlcNAc...) asparagine). His547 functions as the Proton acceptor in the catalytic mechanism. FAD-binding positions include Ala581 and 592–593 (PQ).

Belongs to the GMC oxidoreductase family. FAD is required as a cofactor.

It functions in the pathway secondary metabolite biosynthesis. Functionally, dehydrogenase; part of the gene cluster that mediates the biosynthesis of aspernidine A, a prenylated isoindolinone. The starting point of the biosynthesis of aspernidin A is the production of orsellinaldehyde by the non-reducing polyketide synthase pkfA. Hydroxylation, methylation of one of the phenol groups, and prenylation, presumably catalyzed by the prenyltransferase pkfE, would be needed to yield aspernidine D. Subsequently, the cytochrome P450 monooxygenase pkfB is responsible for hydroxylation of aspernidine D to yield aspernidine E. The dehydrogenase pkfF may be responsible for further oxidation of aspernidine E to form a dialdehyde intermediate which is further transformed in a series of steps, some of which are enzyme-mediated, to generate aspernidine A. The possibility that additional enzymes outside of the cluster are involved in aspernidine A biosynthesis cannot be excluded. The sequence is that of Dehydrogenase pkfF from Emericella nidulans (strain FGSC A4 / ATCC 38163 / CBS 112.46 / NRRL 194 / M139) (Aspergillus nidulans).